A 360-amino-acid polypeptide reads, in one-letter code: DNA polymerase IV (360 aa).

The region spanning Ile-8 to Gly-189 is the UmuC domain. Residues Asp-12 and Asp-107 each contribute to the Mg(2+) site. Glu-108 is a catalytic residue.

This sequence belongs to the DNA polymerase type-Y family. Monomer. Mg(2+) is required as a cofactor.

It is found in the cytoplasm. It catalyses the reaction DNA(n) + a 2'-deoxyribonucleoside 5'-triphosphate = DNA(n+1) + diphosphate. Functionally, poorly processive, error-prone DNA polymerase involved in untargeted mutagenesis. Copies undamaged DNA at stalled replication forks, which arise in vivo from mismatched or misaligned primer ends. These misaligned primers can be extended by PolIV. Exhibits no 3'-5' exonuclease (proofreading) activity. May be involved in translesional synthesis, in conjunction with the beta clamp from PolIII. This Vibrio cholerae serotype O1 (strain ATCC 39315 / El Tor Inaba N16961) protein is DNA polymerase IV.